The sequence spans 263 residues: Hydroxyethylthiazole kinase (263 aa).

Residue Met45 participates in substrate binding. Residues Arg121 and Ser167 each coordinate ATP. Residue Gly194 coordinates substrate.

It belongs to the Thz kinase family. The cofactor is Mg(2+).

The catalysed reaction is 5-(2-hydroxyethyl)-4-methylthiazole + ATP = 4-methyl-5-(2-phosphooxyethyl)-thiazole + ADP + H(+). It participates in cofactor biosynthesis; thiamine diphosphate biosynthesis; 4-methyl-5-(2-phosphoethyl)-thiazole from 5-(2-hydroxyethyl)-4-methylthiazole: step 1/1. In terms of biological role, catalyzes the phosphorylation of the hydroxyl group of 4-methyl-5-beta-hydroxyethylthiazole (THZ). This is Hydroxyethylthiazole kinase from Vibrio campbellii (strain ATCC BAA-1116).